A 336-amino-acid chain; its full sequence is S-adenosylmethionine:tRNA ribosyltransferase-isomerase (336 aa).

This sequence belongs to the QueA family. In terms of assembly, monomer.

The protein resides in the cytoplasm. The catalysed reaction is 7-aminomethyl-7-carbaguanosine(34) in tRNA + S-adenosyl-L-methionine = epoxyqueuosine(34) in tRNA + adenine + L-methionine + 2 H(+). It functions in the pathway tRNA modification; tRNA-queuosine biosynthesis. Transfers and isomerizes the ribose moiety from AdoMet to the 7-aminomethyl group of 7-deazaguanine (preQ1-tRNA) to give epoxyqueuosine (oQ-tRNA). The sequence is that of S-adenosylmethionine:tRNA ribosyltransferase-isomerase from Sulfurihydrogenibium sp. (strain YO3AOP1).